We begin with the raw amino-acid sequence, 162 residues long: Transcription elongation factor GreA (162 aa).

Residues 45-74 (ENAEYEAAREKQAFIEGRIKELEDMTARAE) adopt a coiled-coil conformation.

Belongs to the GreA/GreB family.

Necessary for efficient RNA polymerase transcription elongation past template-encoded arresting sites. The arresting sites in DNA have the property of trapping a certain fraction of elongating RNA polymerases that pass through, resulting in locked ternary complexes. Cleavage of the nascent transcript by cleavage factors such as GreA or GreB allows the resumption of elongation from the new 3'terminus. GreA releases sequences of 2 to 3 nucleotides. This chain is Transcription elongation factor GreA, found in Rickettsia conorii (strain ATCC VR-613 / Malish 7).